A 1278-amino-acid chain; its full sequence is Sterol regulatory element-binding protein cleavage-activating protein (1278 aa).

Over 1 to 18 (MTLTERLREKISQAFYNH) the chain is Cytoplasmic. The helical transmembrane segment at 19–39 (GLFCASYPIPIILFTGLCILA) threads the bilayer. The Lumenal portion of the chain corresponds to 40–279 (CCYPLLKLPL…SLVHVHFKEE (240 aa)). The loop-1 stretch occupies residues 46 to 284 (KLPLPGTGPV…HFKEEIGIAE (239 aa)). The disordered stretch occupies residues 60–80 (PVKDYSPPPLTSDHKPGEPNE). A glycan (N-linked (GlcNAc...) asparagine) is linked at Asn263. The chain crosses the membrane as a helical span at residues 280–300 (IGIAELIPLVTTYIILFAYIY). An SSD domain is found at 284–442 (ELIPLVTTYI…MLFFTTVLSI (159 aa)). Topologically, residues 301 to 312 (FSTRKIDMVKSK) are cytoplasmic. The helical transmembrane segment at 313 to 333 (WGLALAAVVTVLSSLLMSVGL) threads the bilayer. Residues 334 to 344 (CTLFGLTPTLN) are Lumenal-facing. A helical membrane pass occupies residues 345 to 365 (GGEIFPYLVVVIGLENVLVLT). The Cytoplasmic portion of the chain corresponds to 366-401 (KSVVSTPVDLEVKLRIAQGLSSESWSIMKNMATELG). Residues 402-422 (IVLIGYFTLVPAIQEFCLFAV) traverse the membrane as a helical segment. Position 423 (Val423) is a topological domain, lumenal. Residues 424 to 444 (GLVSDFFLQMLFFTTVLSIDI) form a helical membrane-spanning segment. Residues 445–518 (RRMELADLNK…FLARTRLAQR (74 aa)) are Cytoplasmic-facing. The short motif at 447-452 (MELADL) is the ER export signal element. Glycyl lysine isopeptide (Lys-Gly) (interchain with G-Cter in ubiquitin) cross-links involve residues Lys454 and Lys466. The chain crosses the membrane as a helical span at residues 519–539 (LIMAGTVVWIGILVYTDPAGL). Positions 535–710 (DPAGLRTYLA…QAQRDLTLYK (176 aa)) are loop-7. Over 540–707 (RTYLAAQVTE…GTAQAQRDLT (168 aa)) the chain is Lumenal. A disordered region spans residues 581–618 (PPDASKLPENQTLPGEPPEPGGLAEGVHDSPAPEVTWG). Asn590 and Asn641 each carry an N-linked (GlcNAc...) asparagine glycan. The disordered stretch occupies residues 668 to 696 (EGRHPQDGRSAWPPPRPGQGGLWEAGPKG). Residues 708–728 (LYKVAALGLASGIVLVLLLLC) traverse the membrane as a helical segment. Residues 729–1278 (LYRVLCPRNY…YVPSVLEKLD (550 aa)) lie on the Cytoplasmic side of the membrane. An interaction with SREBF2 region spans residues 731-1278 (RVLCPRNYGQ…YVPSVLEKLD (548 aa)). Residues 771–811 (VLRGHLMDIECLASDGMLLVSCCLAGHVCVWDAQTGDCLTR) form a WD 1 repeat. 5 positions are modified to phosphoserine: Ser821, Ser837, Ser850, Ser905, and Ser935. The interval 834-904 (ERLSDGGKGG…RYRAGRRAQD (71 aa)) is disordered. WD repeat units follow at residues 951 to 1001 (PPEK…LRCS) and 1004 to 1041 (EVSS…ALSP). Omega-N-methylarginine is present on Arg1050. WD repeat units follow at residues 1076–1113 (AHQK…CLFT), 1116–1154 (GHSG…RVSH), 1157–1194 (AHRG…KLYS), and 1196–1234 (QQDL…LLQT).

Belongs to the WD repeat SCAP family. Membrane region forms a homotetramer. Component of the SCAP-SREBP complex (composed of SCAP and SREBF1/SREBP1 or SREBF2/SREBP2); interacts with SREBF1/SREBP1 or SREBF2/SREBP2 through its C-terminal cytoplasmic domain. Forms a ternary complex with INSIG1 or INSIG2 through its transmembrane domains at high sterol concentrations. Interacts with PAQR3; the interaction anchors the SCAP-SREBP complex to the Golgi apparatus in low cholesterol conditions. Interacts with the SEC23-SEC24 complex in a SAR1-GTP-dependent manner through an ER export signal in its third cytoplasmic loop. Interacts with RNF139; the interaction inhibits the interaction of SCAP with SEC24B and hampering the ER to Golgi transport of the SCAP-SREBP complex. Interacts with SPRING1. In terms of processing, ubiquitinated at Lys-454 and Lys-466. RNF145 triggers ubiquitination of SCAP, likely inhibiting SCAP-SREBP complex transport to the Golgi apparatus and the subsequent processing/maturation of SREBF2/SREBP2.

It is found in the endoplasmic reticulum membrane. The protein resides in the golgi apparatus membrane. It localises to the cytoplasmic vesicle. The protein localises to the COPII-coated vesicle membrane. Escort protein required for cholesterol as well as lipid homeostasis. Regulates export of the SCAP-SREBP complex from the endoplasmic reticulum to the Golgi upon low cholesterol, thereby regulating the processing of sterol regulatory element-binding proteins (SREBPs) SREBF1/SREBP1 and SREBF2/SREBP2. At high sterol concentrations, formation of a ternary complex with INSIG (INSIG1 or INSIG2) leads to mask the ER export signal in SCAP, promoting retention of the complex in the endoplasmic reticulum. Low sterol concentrations trigger release of INSIG, a conformational change in the SSD domain of SCAP, unmasking of the ER export signal, promoting recruitment into COPII-coated vesicles and transport of the SCAP-SREBP to the Golgi: in the Golgi, SREBPs are then processed, releasing the transcription factor fragment of SREBPs from the membrane, its import into the nucleus and up-regulation of LDLR, INSIG1 and the mevalonate pathway. Binds cholesterol via its SSD domain. In Bos taurus (Bovine), this protein is Sterol regulatory element-binding protein cleavage-activating protein.